The sequence spans 130 residues: Flagellar assembly factor FliW (130 aa).

Belongs to the FliW family. Interacts with translational regulator CsrA and flagellin(s).

The protein localises to the cytoplasm. Functionally, acts as an anti-CsrA protein, binds CsrA and prevents it from repressing translation of its target genes, one of which is flagellin. Binds to flagellin and participates in the assembly of the flagellum. The sequence is that of Flagellar assembly factor FliW from Borrelia turicatae (strain 91E135).